A 502-amino-acid chain; its full sequence is ATP synthase subunit alpha (502 aa).

The disordered stretch occupies residues 115-135 (VDGLGPINTTNTRPIESPAPG). An ATP-binding site is contributed by 169 to 176 (GDRQTGKT).

It belongs to the ATPase alpha/beta chains family. F-type ATPases have 2 components, CF(1) - the catalytic core - and CF(0) - the membrane proton channel. CF(1) has five subunits: alpha(3), beta(3), gamma(1), delta(1), epsilon(1). CF(0) has three main subunits: a(1), b(2) and c(9-12). The alpha and beta chains form an alternating ring which encloses part of the gamma chain. CF(1) is attached to CF(0) by a central stalk formed by the gamma and epsilon chains, while a peripheral stalk is formed by the delta and b chains.

The protein resides in the cell membrane. The catalysed reaction is ATP + H2O + 4 H(+)(in) = ADP + phosphate + 5 H(+)(out). Functionally, produces ATP from ADP in the presence of a proton gradient across the membrane. The alpha chain is a regulatory subunit. In Bacillus cereus (strain G9842), this protein is ATP synthase subunit alpha.